We begin with the raw amino-acid sequence, 119 residues long: Immunoglobulin heavy variable 3-72 (119 aa).

The signal sequence occupies residues 1–19 (MEFGLSWVFLVVILQGVQC). A framework-1 region spans residues 20-44 (EVQLVESGGGLVQPGGSLRLSCAAS). One can recognise an Ig-like domain in the interval 20 to 119 (EVQLVESGGG…EDTAVYYCAR (100 aa)). Cys-41 and Cys-117 are oxidised to a cystine. The complementarity-determining-1 stretch occupies residues 45-52 (GFTFSDHY). The interval 53–69 (MDWVRQAPGKGLEWVGR) is framework-2. The interval 70 to 79 (TRNKANSYTT) is complementarity-determining-2. The interval 80-117 (EYAASVKGRFTISRDDSKNSLYLQMNSLKTEDTAVYYC) is framework-3. Residues 118–119 (AR) form a complementarity-determining-3 region.

As to quaternary structure, immunoglobulins are composed of two identical heavy chains and two identical light chains; disulfide-linked.

It localises to the secreted. Its subcellular location is the cell membrane. In terms of biological role, v region of the variable domain of immunoglobulin heavy chains that participates in the antigen recognition. Immunoglobulins, also known as antibodies, are membrane-bound or secreted glycoproteins produced by B lymphocytes. In the recognition phase of humoral immunity, the membrane-bound immunoglobulins serve as receptors which, upon binding of a specific antigen, trigger the clonal expansion and differentiation of B lymphocytes into immunoglobulins-secreting plasma cells. Secreted immunoglobulins mediate the effector phase of humoral immunity, which results in the elimination of bound antigens. The antigen binding site is formed by the variable domain of one heavy chain, together with that of its associated light chain. Thus, each immunoglobulin has two antigen binding sites with remarkable affinity for a particular antigen. The variable domains are assembled by a process called V-(D)-J rearrangement and can then be subjected to somatic hypermutations which, after exposure to antigen and selection, allow affinity maturation for a particular antigen. The sequence is that of Immunoglobulin heavy variable 3-72 from Homo sapiens (Human).